A 231-amino-acid chain; its full sequence is 7-cyano-7-deazaguanine synthase (231 aa).

Residue 8–18 participates in ATP binding; the sequence is FSGGQDSTTCL. Residues C188, C197, C200, and C203 each coordinate Zn(2+).

It belongs to the QueC family. The cofactor is Zn(2+).

It catalyses the reaction 7-carboxy-7-deazaguanine + NH4(+) + ATP = 7-cyano-7-deazaguanine + ADP + phosphate + H2O + H(+). The protein operates within purine metabolism; 7-cyano-7-deazaguanine biosynthesis. In terms of biological role, catalyzes the ATP-dependent conversion of 7-carboxy-7-deazaguanine (CDG) to 7-cyano-7-deazaguanine (preQ(0)). This Salmonella gallinarum (strain 287/91 / NCTC 13346) protein is 7-cyano-7-deazaguanine synthase.